A 704-amino-acid polypeptide reads, in one-letter code: Phosphoribosylformylglycinamidine synthase subunit PurL (704 aa).

Residue His-32 is part of the active site. Tyr-35 is an ATP binding site. Glu-76 lines the Mg(2+) pocket. Residues 77 to 80 (SHNH) and Arg-99 each bind substrate. His-78 acts as the Proton acceptor in catalysis. Asp-100 provides a ligand contact to Mg(2+). Residue Gln-224 coordinates substrate. Asp-252 serves as a coordination point for Mg(2+). 296-298 (ESQ) is a substrate binding site. Asp-471 and Gly-508 together coordinate ATP. Asn-509 is a Mg(2+) binding site. Ser-511 provides a ligand contact to substrate.

The protein belongs to the FGAMS family. Monomer. Part of the FGAM synthase complex composed of 1 PurL, 1 PurQ and 2 PurS subunits.

It localises to the cytoplasm. The enzyme catalyses N(2)-formyl-N(1)-(5-phospho-beta-D-ribosyl)glycinamide + L-glutamine + ATP + H2O = 2-formamido-N(1)-(5-O-phospho-beta-D-ribosyl)acetamidine + L-glutamate + ADP + phosphate + H(+). Its pathway is purine metabolism; IMP biosynthesis via de novo pathway; 5-amino-1-(5-phospho-D-ribosyl)imidazole from N(2)-formyl-N(1)-(5-phospho-D-ribosyl)glycinamide: step 1/2. In terms of biological role, part of the phosphoribosylformylglycinamidine synthase complex involved in the purines biosynthetic pathway. Catalyzes the ATP-dependent conversion of formylglycinamide ribonucleotide (FGAR) and glutamine to yield formylglycinamidine ribonucleotide (FGAM) and glutamate. The FGAM synthase complex is composed of three subunits. PurQ produces an ammonia molecule by converting glutamine to glutamate. PurL transfers the ammonia molecule to FGAR to form FGAM in an ATP-dependent manner. PurS interacts with PurQ and PurL and is thought to assist in the transfer of the ammonia molecule from PurQ to PurL. The chain is Phosphoribosylformylglycinamidine synthase subunit PurL from Pyrococcus furiosus (strain ATCC 43587 / DSM 3638 / JCM 8422 / Vc1).